Reading from the N-terminus, the 149-residue chain is D-aminoacyl-tRNA deacylase (149 aa).

The short motif at 137 to 138 (GP) is the Gly-cisPro motif, important for rejection of L-amino acids element.

Belongs to the DTD family. As to quaternary structure, homodimer.

The protein localises to the cytoplasm. It catalyses the reaction glycyl-tRNA(Ala) + H2O = tRNA(Ala) + glycine + H(+). The catalysed reaction is a D-aminoacyl-tRNA + H2O = a tRNA + a D-alpha-amino acid + H(+). An aminoacyl-tRNA editing enzyme that deacylates mischarged D-aminoacyl-tRNAs. Also deacylates mischarged glycyl-tRNA(Ala), protecting cells against glycine mischarging by AlaRS. Acts via tRNA-based rather than protein-based catalysis; rejects L-amino acids rather than detecting D-amino acids in the active site. By recycling D-aminoacyl-tRNA to D-amino acids and free tRNA molecules, this enzyme counteracts the toxicity associated with the formation of D-aminoacyl-tRNA entities in vivo and helps enforce protein L-homochirality. This Clostridium botulinum (strain Loch Maree / Type A3) protein is D-aminoacyl-tRNA deacylase.